An 853-amino-acid chain; its full sequence is Dynamin-A (853 aa).

The region spanning 22–296 (PLDLPQIVVV…LMFHIRDTLP (275 aa)) is the Dynamin-type G domain. The tract at residues 32–39 (GSQSSGKS) is G1 motif. 32–40 (GSQSSGKSS) serves as a coordination point for GTP. Positions 58–60 (VTR) are G2 motif. The segment at 138-141 (DLPG) is G3 motif. Residues 207–210 (TKLD) are G4 motif. GTP-binding positions include 207–213 (TKLDLMD) and 238–241 (NRSQ). The G5 motif stretch occupies residues 237–240 (INRS). Low complexity-rich tracts occupy residues 523–569 (DQYQ…QQNQ) and 590–607 (PAQQQPNQQPNQLNKGPQ). Residues 523–738 (DQYQQQQQQQ…RYQDDFYGRG (216 aa)) are disordered. The span at 610-624 (PPNQSKPSSIPQNGP) shows a compositional bias: polar residues. 2 stretches are compositionally biased toward low complexity: residues 625 to 635 (NNNNNNNNNNN) and 664 to 728 (NNSN…SSYN). The region spanning 762-853 (TELIRELLIS…IINEIRDFRN (92 aa)) is the GED domain.

Belongs to the TRAFAC class dynamin-like GTPase superfamily. Dynamin/Fzo/YdjA family.

It localises to the cytoplasm. Its function is as follows. Function in membrane trafficking processes along the endo-lysosomal pathway. The protein is Dynamin-A (dymA) of Dictyostelium discoideum (Social amoeba).